Consider the following 1127-residue polypeptide: Elongation factor-like GTPase 1 (1127 aa).

A tr-type G domain is found at 17-272 (ANIRNICVLA…LLKTLWGDYY (256 aa)). GTP-binding positions include 26-33 (AHVDHGKT), 92-96 (DSPGH), and 146-149 (NKID). Positions 429–496 (KPRPLTQEEM…VASVSRQPVS (68 aa)) are disordered. Basic and acidic residues-rich tracts occupy residues 438–452 (MAQRRERARQRHAEK) and 474–484 (SPHEDEPRGDE). Lys-528 is modified (N6-acetyllysine).

The protein belongs to the TRAFAC class translation factor GTPase superfamily. Classic translation factor GTPase family. As to quaternary structure, associates with the 60S ribosomal subunit. Found in a complex consisting of the 60S ribosomal subunit, SBDS and EFL1.

It carries out the reaction GTP + H2O = GDP + phosphate + H(+). Its activity is regulated as follows. GTPase activity is stimulated in the presence of 60S ribosome subunits. Its function is as follows. GTPase involved in the biogenesis of the 60S ribosomal subunit and translational activation of ribosomes. Together with SBDS, triggers the GTP-dependent release of EIF6 from 60S pre-ribosomes in the cytoplasm, thereby activating ribosomes for translation competence by allowing 80S ribosome assembly and facilitating EIF6 recycling to the nucleus, where it is required for 60S rRNA processing and nuclear export. The protein is Elongation factor-like GTPase 1 (Efl1) of Mus musculus (Mouse).